The sequence spans 209 residues: uncharacterized protein (209 aa).

6 consecutive 4Fe-4S ferredoxin-type domains span residues 38 to 67, 63 to 92, 90 to 119, 122 to 151, 145 to 174, and 179 to 209; these read KTKP…IFSF, KIFS…KDRF, DRFT…KEIP, KTPV…EINP, INKE…TPDE, and LIVK…HRES. The [4Fe-4S] cluster site is built by Cys-47, Cys-50, Cys-53, Cys-57, Cys-72, Cys-75, Cys-78, Cys-82, Cys-99, Cys-102, Cys-105, and Cys-109. [4Fe-4S] cluster contacts are provided by Cys-154, Cys-157, Cys-160, Cys-164, Cys-188, Cys-191, Cys-194, and Cys-198.

This is an uncharacterized protein from Methanocaldococcus jannaschii (strain ATCC 43067 / DSM 2661 / JAL-1 / JCM 10045 / NBRC 100440) (Methanococcus jannaschii).